A 276-amino-acid polypeptide reads, in one-letter code: Diaminopimelate epimerase (276 aa).

Substrate is bound by residues Asn13, Gln46, and Asn66. Residue Cys75 is the Proton donor of the active site. Substrate contacts are provided by residues Gly76 to Asn77, Asn159, Asn192, and Glu210 to Arg211. Cys219 (proton acceptor) is an active-site residue. Residue Gly220–Thr221 coordinates substrate.

Belongs to the diaminopimelate epimerase family. Homodimer.

The protein resides in the cytoplasm. It carries out the reaction (2S,6S)-2,6-diaminopimelate = meso-2,6-diaminopimelate. It functions in the pathway amino-acid biosynthesis; L-lysine biosynthesis via DAP pathway; DL-2,6-diaminopimelate from LL-2,6-diaminopimelate: step 1/1. In terms of biological role, catalyzes the stereoinversion of LL-2,6-diaminopimelate (L,L-DAP) to meso-diaminopimelate (meso-DAP), a precursor of L-lysine and an essential component of the bacterial peptidoglycan. This is Diaminopimelate epimerase from Pseudomonas syringae pv. tomato (strain ATCC BAA-871 / DC3000).